The chain runs to 163 residues: SsrA-binding protein (163 aa).

It belongs to the SmpB family.

It localises to the cytoplasm. Functionally, required for rescue of stalled ribosomes mediated by trans-translation. Binds to transfer-messenger RNA (tmRNA), required for stable association of tmRNA with ribosomes. tmRNA and SmpB together mimic tRNA shape, replacing the anticodon stem-loop with SmpB. tmRNA is encoded by the ssrA gene; the 2 termini fold to resemble tRNA(Ala) and it encodes a 'tag peptide', a short internal open reading frame. During trans-translation Ala-aminoacylated tmRNA acts like a tRNA, entering the A-site of stalled ribosomes, displacing the stalled mRNA. The ribosome then switches to translate the ORF on the tmRNA; the nascent peptide is terminated with the 'tag peptide' encoded by the tmRNA and targeted for degradation. The ribosome is freed to recommence translation, which seems to be the essential function of trans-translation. This chain is SsrA-binding protein, found in Shewanella sp. (strain ANA-3).